A 131-amino-acid chain; its full sequence is Small ribosomal subunit protein uS8 (131 aa).

The protein belongs to the universal ribosomal protein uS8 family. Part of the 30S ribosomal subunit. Contacts proteins S5 and S12.

Its function is as follows. One of the primary rRNA binding proteins, it binds directly to 16S rRNA central domain where it helps coordinate assembly of the platform of the 30S subunit. This is Small ribosomal subunit protein uS8 from Wolbachia sp. subsp. Brugia malayi (strain TRS).